A 146-amino-acid polypeptide reads, in one-letter code: Meiotically up-regulated gene 96 protein (146 aa).

Residues 85 to 104 (LIRYSLILTCLVAILLSVLW) traverse the membrane as a helical segment.

The protein resides in the cytoplasm. Its subcellular location is the membrane. Its function is as follows. Has a role in meiosis. The chain is Meiotically up-regulated gene 96 protein (mug96) from Schizosaccharomyces pombe (strain 972 / ATCC 24843) (Fission yeast).